Here is a 148-residue protein sequence, read N- to C-terminus: Large ribosomal subunit protein bL9 (148 aa).

Belongs to the bacterial ribosomal protein bL9 family.

Binds to the 23S rRNA. This chain is Large ribosomal subunit protein bL9, found in Caldicellulosiruptor saccharolyticus (strain ATCC 43494 / DSM 8903 / Tp8T 6331).